The primary structure comprises 61 residues: Pleurocidin-like peptide WF3 (61 aa).

Residues 1–22 form the signal peptide; sequence MKFTATFLVLSLVVLMAEPGEC. Residues 48–61 constitute a propeptide that is removed on maturation; the sequence is YDEQQELNKRAVDE.

This sequence belongs to the pleurocidin family.

It is found in the secreted. Antimicrobial peptide. The chain is Pleurocidin-like peptide WF3 (ple3) from Pseudopleuronectes americanus (Winter flounder).